Consider the following 454-residue polypeptide: MSHKKVVAISESSSDEEVPVAPPTAPPKKRQRKAVEEPRGHQAMVEIARQATAALKARGDPGSIIVQTFCDQTVDVDKEGNVIFTPAKQKSICNKSGSPLASVASKIFKASEHKWQSAMEFALKVLNAYQVDHSKLTLLPDEGTLECFKKAVQAYITTSKMHVTYTFTNQKTFLHVAGRLLLDFVIKAAELAPGVNPSGCVVWQHGCQSSLMCLHGSPMIQKEQLVEMDVNSENAQRALKENPEKTKIVSNRWGRNVVQFKNEDAFCCSMDVNMSGGNFSGASCGMFYTDGPKAIMAFQQIMAFLKACYPSMPNAESHLLMPLKCECNWNSSLPLLGRQTCKITPFSLASANHIDKSEVDDQKMLATLNNPAMLVFQCCNPVYRNSKAAPQKNCDFKISSVDLVSCLQIAKQIWLSTVGEKPPVKFPEFHWSDEHRYQTTILPQGQHDDDLVLF.

The segment at 1–41 is disordered; it reads MSHKKVVAISESSSDEEVPVAPPTAPPKKRQRKAVEEPRGH. Residue Tyr129 is modified to Phosphotyrosine; by host. Residues Cys213 and His215 each contribute to the Zn(2+) site. Positions 226–260 are flexible loop; the sequence is VEMDVNSENAQRALKENPEKTKIVSNRWGRNVVQF. Cys268, Cys284, Cys325, Cys327, Cys378, and Cys394 together coordinate Zn(2+). Residues 440–454 form a C-terminal arm, DBP binding region; sequence TILPQGQHDDDLVLF.

It belongs to the adenoviridae E2A DNA-binding protein family. Homomultimerizes on viral ssDNA bound to pTP. Forms a initiation complex with viral polymerase, pTP and hosts NFIA and POU2F1/OCT1. Interacts with host SRCAP.

It is found in the host nucleus. Its function is as follows. Plays a role in the elongation phase of viral strand displacement replication by unwinding the template in an ATP-independent fashion, employing its capacity to form multimers. Also enhances the rate of initiation. Released from template upon second strand synthesis. Assembles in complex with viral pTP, viral pol, host NFIA and host POU2F1/OCT1 on viral origin of replication. Covers the whole ssDNA genome during synthesis. The complementary strand synthesis induces its relese from DNA template. May inhibit cellular transcription mediated by the interaction between host SRCAP and CBP. This is DNA-binding protein from Canine adenovirus serotype 1 (strain RI261) (CAdV-1).